An 852-amino-acid chain; its full sequence is MDYLIIIRITAVAVVLYLTRYVCCLYLHLQDVPGPLFAKFTNLQRVWWVKSGRAHEYHRRMHAVYGPAVRFGPNMVSISDPRTIPAIYPSRPGFPKSDFYRTQKPYTPNKGAMPAVFNSQDEDLHKRLRSPIAPLYSMTNVVKLESFVDQTLAVLLEQLDGRFLGSNDVPFDLGSWLQYFAFDSMGTLTFSRRYGFLEQGRDMNGILGEIWKFMKRVSVMGQIPWFDEFCNTNPFIALFRSPTGFGVLKVVDKFILQRLAPREKDEVSDEKDMLSQFLNIQASNPDVMPWAPRAWTFSNIMAGSDSTANVMRTIMYNLLVHRDTLSRLQDELLESESSNGLSRTCPSWEKVRDLPYLDACVLEALRLHPPFCLPFERVVPGGGLTVCETYLPAGTIVGISPYMANRDKETFGNDADEWRPERWLGLSHEDRKRLENSLLTFGAGRRTCLGKNIAILEIKKLIPVLLLNYDIQIVNPENYKTENAWFFKQTGLQAVIRKRAKMERGSSNKDKPTLPPVLNIPPSSSTVDVRVIDPGTLLDLRPDLFWQPELPGLRKVTAPTYCFLISVGTRHVLFDLGVRQDWERLPPSVVAMIKSQTTIQNPRNISDILDSDASSLGIRSTDIEAIIWSHAHFDHIGDPSTFPLSTELVVGPGIRDSHWPGFPTNPDAINLNSDIQGRKVREISFERTEKEAIKIGSFDALDYFGDGSFYLLNAAGHSIGHIGALARVTTSPDSFVFMGGDSCHHAGVLRPSKYLPCPSHSRHIPLSSESESVFTLSPVLPSDYDAALKTVDNIKELDAYDNVFLILAHDSTLKGNMDFYPLTINDWKAKGYGKQTKWLFYKDLEDAMEGTK.

The Lumenal segment spans residues 1-6 (MDYLII). Residues 7 to 29 (IRITAVAVVLYLTRYVCCLYLHL) traverse the membrane as a helical segment. Residues 30–852 (QDVPGPLFAK…DLEDAMEGTK (823 aa)) lie on the Cytoplasmic side of the membrane. Cys448 contacts heme.

This sequence belongs to the cytochrome P450 family. Heme is required as a cofactor.

It localises to the endoplasmic reticulum membrane. It catalyses the reaction 5-methylorsellinate + reduced [NADPH--hemoprotein reductase] + O2 = 4,6-dihydroxy-2-(hydroxymethyl)-3-methylbenzoate + oxidized [NADPH--hemoprotein reductase] + H2O + H(+). The enzyme catalyses 4,6-dihydroxy-2-(hydroxymethyl)-3-methylbenzoate + H(+) = 5,7-dihydroxy-4-methylphthalide + H2O. It participates in secondary metabolite biosynthesis; terpenoid biosynthesis. Cytochrome P450 monooxygenase; part of the gene cluster that mediates the biosynthesis of mycophenolic acid (MPA), the first isolated antibiotic natural product in the world obtained from a culture of Penicillium brevicompactum in 1893. MpaDE is an endoplasmic reticulum-bound enzyme that catalyzes the conversion of 5-methylorsellinic acid (5MOA) into the phthalide compound 5,7-dihydroxy-4,6-dimethylphthalide (DHMP). MpaDE first catalyzes hydroxylation of 5-MOA to 4,6-dihydroxy-2-(hydroxymethyl)-3-methylbenzoic acid (DHMB), and then acts as a lactone synthase that catalyzes the ring closure to convert DHMB into DHMP. The first step of the pathway is the synthesis of 5-methylorsellinic acid (5MOA) by the cytosolic polyketide synthase mpaC. 5MOA is then converted to the phthalide compound 5,7-dihydroxy-4,6-dimethylphthalide (DHMP) by the endoplasmic reticulum-bound cytochrome P450 monooxygenase mpaDE. MpaDE first catalyzes hydroxylation of 5-MOA to 4,6-dihydroxy-2-(hydroxymethyl)-3-methylbenzoic acid (DHMB). MpaDE then acts as a lactone synthase that catalyzes the ring closure to convert DHMB into DHMP. The next step is the prenylation of DHMP by the Golgi apparatus-associated prenyltransferase mpaA to yield farnesyl-DHMP (FDHMP). The ER-bound oxygenase mpaB then mediates the oxidative cleavage the C19-C20 double bond in FDHMP to yield FDHMP-3C via a mycophenolic aldehyde intermediate. The O-methyltransferase mpaG catalyzes the methylation of FDHMP-3C to yield MFDHMP-3C. After the cytosolic methylation of FDHMP-3C, MFDHMP-3C enters into peroxisomes probably via free diffusion due to its low molecular weight. Upon a peroxisomal CoA ligation reaction, catalyzed by a beta-oxidation component enzyme acyl-CoA ligase ACL891, MFDHMP-3C-CoA would then be restricted to peroxisomes for the following beta-oxidation pathway steps. The peroxisomal beta-oxidation machinery than converts MFDHMP-3C-CoA into MPA_CoA, via a beta-oxidation chain-shortening process. Finally mpaH acts as a peroxisomal acyl-CoA hydrolase with high substrate specificity toward MPA-CoA to release the final product MPA. In Penicillium roqueforti (strain FM164), this protein is Cytochrome P450 monooxygenase mpaDE.